The primary structure comprises 286 residues: uncharacterized protein (286 aa).

A Radical SAM core domain is found at 2–221; sequence VDGMKHLILK…PIYIKNLQKR (220 aa). [4Fe-4S] cluster contacts are provided by Cys16, Cys20, and Cys23.

It belongs to the radical SAM superfamily. Anaerobic sulfatase-maturating enzyme family. [4Fe-4S] cluster serves as cofactor.

This is an uncharacterized protein from Methanocaldococcus jannaschii (strain ATCC 43067 / DSM 2661 / JAL-1 / JCM 10045 / NBRC 100440) (Methanococcus jannaschii).